The following is a 381-amino-acid chain: MSEYKYCVGIMSGTSLDGIDVALCKIRGSGLDTDVKLIDCQTYPYPTNLLCDIKKSLDLSTSNAQLLCSLNFKLGIEYANAVKKLVAANNLNLKDIAFIASHGQTIYHQANNERGFIKSSLQLGDAATIAYECQTTVVSNFRAGDIAAGGDGAPLVPYVDYLLYRDKDKSRALHNIGGIANTTIIPKNANIDDIYAFDTGPGNMMINRSMEVLFNQDYDKGGDTAAAGIVIVDMLQELLDNPYLKQKPPKSTGRELFGINYTDKIIAKYKQNKPEDIVHTLTIFTAQSIVRAYKDFVFNKNKLDQIIFTGGGAYNKFLIKTISDLLDVEVLTFEDIGESSDAKEAIAFAVLGNETLNKSYNNIPSATGAKSRVILGQINFF.

An ATP-binding site is contributed by 13–20 (GTSLDGID).

The protein belongs to the anhydro-N-acetylmuramic acid kinase family.

The enzyme catalyses 1,6-anhydro-N-acetyl-beta-muramate + ATP + H2O = N-acetyl-D-muramate 6-phosphate + ADP + H(+). It functions in the pathway amino-sugar metabolism; 1,6-anhydro-N-acetylmuramate degradation. Its pathway is cell wall biogenesis; peptidoglycan recycling. Functionally, catalyzes the specific phosphorylation of 1,6-anhydro-N-acetylmuramic acid (anhMurNAc) with the simultaneous cleavage of the 1,6-anhydro ring, generating MurNAc-6-P. Is required for the utilization of anhMurNAc either imported from the medium or derived from its own cell wall murein, and thus plays a role in cell wall recycling. The sequence is that of Anhydro-N-acetylmuramic acid kinase from Francisella tularensis subsp. novicida (strain U112).